Reading from the N-terminus, the 216-residue chain is ATP phosphoribosyltransferase (216 aa).

It belongs to the ATP phosphoribosyltransferase family. Short subfamily. As to quaternary structure, heteromultimer composed of HisG and HisZ subunits.

It localises to the cytoplasm. The catalysed reaction is 1-(5-phospho-beta-D-ribosyl)-ATP + diphosphate = 5-phospho-alpha-D-ribose 1-diphosphate + ATP. The protein operates within amino-acid biosynthesis; L-histidine biosynthesis; L-histidine from 5-phospho-alpha-D-ribose 1-diphosphate: step 1/9. In terms of biological role, catalyzes the condensation of ATP and 5-phosphoribose 1-diphosphate to form N'-(5'-phosphoribosyl)-ATP (PR-ATP). Has a crucial role in the pathway because the rate of histidine biosynthesis seems to be controlled primarily by regulation of HisG enzymatic activity. This Chromohalobacter salexigens (strain ATCC BAA-138 / DSM 3043 / CIP 106854 / NCIMB 13768 / 1H11) protein is ATP phosphoribosyltransferase.